The sequence spans 60 residues: Putative transmembrane protein 74 (60 aa).

Helical transmembrane passes span 4–24 and 35–55; these read FSVI…FLTF and WVYI…YQAG.

The protein resides in the host membrane. This is Putative transmembrane protein 74 (SIFV0074) from Sulfolobus islandicus filamentous virus (isolate Iceland/Hveragerdi) (SIFV).